The following is a 288-amino-acid chain: ATP synthase gamma chain (288 aa).

This sequence belongs to the ATPase gamma chain family. As to quaternary structure, F-type ATPases have 2 components, CF(1) - the catalytic core - and CF(0) - the membrane proton channel. CF(1) has five subunits: alpha(3), beta(3), gamma(1), delta(1), epsilon(1). CF(0) has three main subunits: a, b and c.

Its subcellular location is the cell inner membrane. In terms of biological role, produces ATP from ADP in the presence of a proton gradient across the membrane. The gamma chain is believed to be important in regulating ATPase activity and the flow of protons through the CF(0) complex. This Actinobacillus pleuropneumoniae serotype 3 (strain JL03) protein is ATP synthase gamma chain.